Reading from the N-terminus, the 133-residue chain is Small ribosomal subunit protein uS8 (133 aa).

Belongs to the universal ribosomal protein uS8 family. Part of the 30S ribosomal subunit. Contacts proteins S5 and S12.

Functionally, one of the primary rRNA binding proteins, it binds directly to 16S rRNA central domain where it helps coordinate assembly of the platform of the 30S subunit. This is Small ribosomal subunit protein uS8 from Prochlorococcus marinus (strain MIT 9312).